Consider the following 206-residue polypeptide: RNA-free ribonuclease P (206 aa).

Residues asparagine 187–glycine 206 are disordered. The span at histidine 195–glycine 206 shows a compositional bias: pro residues.

Belongs to the HARP family.

The enzyme catalyses Endonucleolytic cleavage of RNA, removing 5'-extranucleotides from tRNA precursor.. In terms of biological role, RNA-free RNase P that catalyzes the removal of the 5'-leader sequence from pre-tRNA to produce the mature 5'-terminus. The sequence is that of RNA-free ribonuclease P from Halorhodospira halophila (strain DSM 244 / SL1) (Ectothiorhodospira halophila (strain DSM 244 / SL1)).